The following is a 760-amino-acid chain: Transferrin receptor protein 1 (760 aa).

Over 1–67 (MMDQARSAFS…KPKRCSGSIC (67 aa)) the chain is Cytoplasmic. The tract at residues 1 to 67 (MMDQARSAFS…KPKRCSGSIC (67 aa)) is mediates interaction with SH3BP4. A phosphoserine mark is found at S10 and S19. The residue at position 20 (Y20) is a Phosphotyrosine. Residues 20–23 (YTRF) carry the Endocytosis signal motif. Phosphothreonine is present on T21. A Phosphoserine modification is found at S24. The short motif at 58-61 (KPKR) is the Stop-transfer sequence element. Residues C62 and C67 are each lipidated (S-palmitoyl cysteine). Residues 68–88 (YGTIAVIVFFLIGFMIGYLGY) form a helical; Signal-anchor for type II membrane protein membrane-spanning segment. Residues 89–760 (CKGVEPKTEC…GDVWDIDNEF (672 aa)) lie on the Extracellular side of the membrane. T104 is a glycosylation site (O-linked (GalNAc...) threonine). Positions 223–313 (SKAATVTGKL…GTGDPYTPGF (91 aa)) constitute a PA domain. Residues N251 and N317 are each glycosylated (N-linked (GlcNAc...) asparagine). The interval 569–760 (TMDTYKELIE…GDVWDIDNEF (192 aa)) is ligand-binding. The short motif at 646 to 648 (RGD) is the Cell attachment site; required for binding to transferrin element. N727 carries N-linked (GlcNAc...) asparagine glycosylation.

The protein belongs to the peptidase M28 family. M28B subfamily. As to quaternary structure, homodimer; disulfide-linked. Binds one transferrin or HFE molecule per subunit. Binds the HLA class II histocompatibility antigen, DR1. Interacts with SH3BP3. Interacts with STEAP3; facilitates TFRC endocytosis in erythroid precursor cells. Interacts with GRM2. (Microbial infection) Interacts with Guanarito, Junin and Machupo arenavirus glycoprotein complex. In terms of assembly, (Microbial infection) Interacts with rabies virus protein G. As to quaternary structure, (Microbial infection) Interacts with SARS-CoV-2 spike protein S. In terms of processing, stearoylated by ZDHHC6 which inhibits TFRC-mediated activation of the JNK pathway and promotes mitochondrial fragmentation. Stearoylation does not affect iron uptake. Post-translationally, N- and O-glycosylated, phosphorylated and palmitoylated. The serum form is only glycosylated. Proteolytically cleaved on Arg-100 to produce the soluble serum form (sTfR). In terms of processing, palmitoylated on both Cys-62 and Cys-67. Cys-62 seems to be the major site of palmitoylation.

The protein resides in the cell membrane. The protein localises to the melanosome. It localises to the secreted. Cellular uptake of iron occurs via receptor-mediated endocytosis of ligand-occupied transferrin receptor into specialized endosomes. Endosomal acidification leads to iron release. The apotransferrin-receptor complex is then recycled to the cell surface with a return to neutral pH and the concomitant loss of affinity of apotransferrin for its receptor. Transferrin receptor is necessary for development of erythrocytes and the nervous system. A second ligand, the hereditary hemochromatosis protein HFE, competes for binding with transferrin for an overlapping C-terminal binding site. Positively regulates T and B cell proliferation through iron uptake. Acts as a lipid sensor that regulates mitochondrial fusion by regulating activation of the JNK pathway. When dietary levels of stearate (C18:0) are low, promotes activation of the JNK pathway, resulting in HUWE1-mediated ubiquitination and subsequent degradation of the mitofusin MFN2 and inhibition of mitochondrial fusion. When dietary levels of stearate (C18:0) are high, TFRC stearoylation inhibits activation of the JNK pathway and thus degradation of the mitofusin MFN2. Mediates uptake of NICOL1 into fibroblasts where it may regulate extracellular matrix production. Functionally, (Microbial infection) Acts as a receptor for new-world arenaviruses: Guanarito, Junin and Machupo virus. Its function is as follows. (Microbial infection) Acts as a host entry factor for rabies virus that hijacks the endocytosis of TFRC to enter cells. In terms of biological role, (Microbial infection) Acts as a host entry factor for SARS-CoV, MERS-CoV and SARS-CoV-2 viruses that hijack the endocytosis of TFRC to enter cells. In Homo sapiens (Human), this protein is Transferrin receptor protein 1 (TFRC).